Here is a 227-residue protein sequence, read N- to C-terminus: PKHD-type hydroxylase PHZ_c0292 (227 aa).

The Fe2OG dioxygenase domain occupies 78–178 (VVFPPLFNRY…RVCSFFWIQS (101 aa)). Positions 96, 98, and 159 each coordinate Fe cation. Arg-169 is a binding site for 2-oxoglutarate.

Requires Fe(2+) as cofactor. L-ascorbate serves as cofactor.

This Phenylobacterium zucineum (strain HLK1) protein is PKHD-type hydroxylase PHZ_c0292.